Here is a 311-residue protein sequence, read N- to C-terminus: MEKEFVFGHQNPDTDAIGTAIAFSYLQNKLGYNTEAVALGEPNDETAYALKKFGFEAPRVIKKAAPEVNAVMLVDHNEPQQSVSDIDKVKVTHVVDHHRIMNFNTADPLYYRAEPMGCTSTIVWKMFNENGIEIPEKLAGLMLSAIISDTLLLKSPTTTDDDKKAVEALAKIANVDYKEYGLAMLKAGTNISDKSEEELIDLDAKSFALNGHNVRVAQINVVDLPEALERKDAFLKAMEASSNDNGYDMFMLLITNILDSDSEALVVGSDETKELFEKAFDKKLNDSEVKLPGVVSRKKQVVPPLTEAFEG.

Mn(2+) is bound by residues histidine 9, aspartate 13, aspartate 15, aspartate 75, histidine 97, and aspartate 149.

The protein belongs to the PPase class C family. It depends on Mn(2+) as a cofactor.

The protein resides in the cytoplasm. It carries out the reaction diphosphate + H2O = 2 phosphate + H(+). The sequence is that of Probable manganese-dependent inorganic pyrophosphatase from Lactobacillus helveticus (strain DPC 4571).